The sequence spans 259 residues: Methionine aminopeptidase (259 aa).

His-78 lines the substrate pocket. The a divalent metal cation site is built by Asp-95, Asp-106, and His-169. His-176 provides a ligand contact to substrate. Glu-202 is an a divalent metal cation binding site. Position 220 (Trp-220) interacts with substrate. Residue Glu-234 participates in a divalent metal cation binding.

This sequence belongs to the peptidase M24A family. Methionine aminopeptidase type 1 subfamily. As to quaternary structure, monomer. It depends on Co(2+) as a cofactor. The cofactor is Zn(2+). Mn(2+) is required as a cofactor. Fe(2+) serves as cofactor.

The catalysed reaction is Release of N-terminal amino acids, preferentially methionine, from peptides and arylamides.. Functionally, removes the N-terminal methionine from nascent proteins. The N-terminal methionine is often cleaved when the second residue in the primary sequence is small and uncharged (Met-Ala-, Cys, Gly, Pro, Ser, Thr, or Val). Requires deformylation of the N(alpha)-formylated initiator methionine before it can be hydrolyzed. This is Methionine aminopeptidase from Rickettsia prowazekii (strain Madrid E).